Reading from the N-terminus, the 181-residue chain is ATP synthase subunit delta (181 aa).

This sequence belongs to the ATPase delta chain family. F-type ATPases have 2 components, F(1) - the catalytic core - and F(0) - the membrane proton channel. F(1) has five subunits: alpha(3), beta(3), gamma(1), delta(1), epsilon(1). F(0) has three main subunits: a(1), b(2) and c(10-14). The alpha and beta chains form an alternating ring which encloses part of the gamma chain. F(1) is attached to F(0) by a central stalk formed by the gamma and epsilon chains, while a peripheral stalk is formed by the delta and b chains.

Its subcellular location is the cell inner membrane. Functionally, f(1)F(0) ATP synthase produces ATP from ADP in the presence of a proton or sodium gradient. F-type ATPases consist of two structural domains, F(1) containing the extramembraneous catalytic core and F(0) containing the membrane proton channel, linked together by a central stalk and a peripheral stalk. During catalysis, ATP synthesis in the catalytic domain of F(1) is coupled via a rotary mechanism of the central stalk subunits to proton translocation. This protein is part of the stalk that links CF(0) to CF(1). It either transmits conformational changes from CF(0) to CF(1) or is implicated in proton conduction. The polypeptide is ATP synthase subunit delta (Chlorobium phaeovibrioides (strain DSM 265 / 1930) (Prosthecochloris vibrioformis (strain DSM 265))).